The sequence spans 521 residues: Type II methyltransferase M.AluI (521 aa).

The 484-residue stretch at 8–491 (YSFVDLFAGI…REHVRRDRAL (484 aa)) folds into the SAM-dependent MTase C5-type domain. Cys-84 is an active-site residue.

The protein belongs to the class I-like SAM-binding methyltransferase superfamily. C5-methyltransferase family.

It carries out the reaction a 2'-deoxycytidine in DNA + S-adenosyl-L-methionine = a 5-methyl-2'-deoxycytidine in DNA + S-adenosyl-L-homocysteine + H(+). Its function is as follows. A methylase, recognizes the double-stranded sequence 5'-AGCT-3', methylates C-3 on both strands, and protects the DNA from cleavage by the AluI endonuclease. The sequence is that of Type II methyltransferase M.AluI from Cellulosimicrobium cellulans (Arthrobacter luteus).